Reading from the N-terminus, the 981-residue chain is MALFRIYSFLAPFHILVLCQALRNYPDNEVTLLDSMSAPGDLGWEAYPSEGWEEISVMDERNIPMRTYQVCNVMEANQNNWLRTGLIQREGAQRVYVEIKFTLRDCNSLPGVPGTCKETFNVYYHESNNAVAAPLRHIRESQYIKIDTIAADESFTQTDVGDRVMKLNTEVRDISGLSKRGLYLAFQDLGACIALVSVRVFYKRCPLAVLNLARFPDTVTGGDSALVEVRGTCVEDAEELEGPRMFCSADGGWLVPIGRCVCRPGFEEVDGHCQPCRSGFYKASAMDAYCVKCPPHSYSHQDKASECVCERGFYRAESDPRSMACTRPPSAPGNPISMVNETAVTLEWSPPRDSGGRGDVSYSVHCRKCSGETGASERCVPCGSGAHFNPRQFGLTHPRVLVTELQPHTNYTFSVEALNGVSDLSPSPRQLVSVNVTTSQTVSVILKERKGTDSVTLAWQGPEPVDGTVVEYEVTYYEKNQQDQNYTVLKTKSNSMTVDGLKPGTTYIFRVRARTDGGYGNYKGEIELETSHEDMLAVGDPNQQTILAISVAGGAVLLVLLVACFIVSGRRCGYIKAKQDPEEEKMQFQHGRVKLPETRTYIHPHTYEDPNQAVRDFAKEIEVSNIRIERVIGAGEFGEVCSGRLRLPSKREIQVAIKSLKAGYSEHQRRDFLSEASIMGQFDHPNIIRLEGVVTRCKPVMIVTEYMENGSLDTFLKKHDGQFTVIQLLGMLRGIAAGMQYLSEMNYVHRDLAARNILVNRNLVCKVSDFGLSRVLEDDPEAAYTTRGGKIPIRWTAPEAITYRKFTSASDVWSYGIVMWEVISYGERPYWEMSNQDVIKAVDEGYRLPAPMDCPVVLHQLMLDCWEKNRSDRPKFGQIVNTLDRLIRNPSSLKQLANSAVWEDPVTPEAAVNTVEDWLDLIKMGQYKEHFSSAGYVTLDSVLYVSSSELDKMGVELAGHQKKILSSIQCLQAHHGTQVQV.

The signal sequence occupies residues 1 to 20 (MALFRIYSFLAPFHILVLCQ). Residues 21–545 (ALRNYPDNEV…LAVGDPNQQT (525 aa)) lie on the Extracellular side of the membrane. An Eph LBD domain is found at 29 to 210 (EVTLLDSMSA…FYKRCPLAVL (182 aa)). Fibronectin type-III domains follow at residues 328-441 (PPSA…TSQT) and 442-533 (VSVI…TSHE). Residues Asn-340, Asn-410, Asn-435, and Asn-485 are each glycosylated (N-linked (GlcNAc...) asparagine). The chain crosses the membrane as a helical span at residues 546-566 (ILAISVAGGAVLLVLLVACFI). Residues 567–981 (VSGRRCGYIK…QAHHGTQVQV (415 aa)) are Cytoplasmic-facing. A phosphotyrosine; by autocatalysis mark is found at Tyr-601 and Tyr-607. Residues 626 to 887 (IRIERVIGAG…QIVNTLDRLI (262 aa)) enclose the Protein kinase domain. Residues 633 to 638 (GAGEFG), Lys-658, and 705 to 711 (EYMENGS) contribute to the ATP site. A Phosphotyrosine; by autocatalysis modification is found at Tyr-706. Asp-751 serves as the catalytic Proton acceptor. 755–756 (RN) is a binding site for ATP. A phosphotyrosine; by autocatalysis mark is found at Tyr-784 and Tyr-927. One can recognise an SAM domain in the interval 910–974 (AAVNTVEDWL…LSSIQCLQAH (65 aa)). A PDZ-binding motif is present at residues 979-981 (VQV).

Belongs to the protein kinase superfamily. Tyr protein kinase family. Ephrin receptor subfamily. In terms of assembly, heterotetramer upon binding of the ligand. The heterotetramer is composed of an ephrin dimer and a receptor dimer. Oligomerization is probably required to induce biological responses. In terms of processing, autophosphorylates upon activation by efna5. As to expression, widely expressed in the developing zebrafish nervous system.

It is found in the cell membrane. It catalyses the reaction L-tyrosyl-[protein] + ATP = O-phospho-L-tyrosyl-[protein] + ADP + H(+). Its function is as follows. Receptor tyrosine kinase which binds promiscuously membrane-bound ephrin family ligands residing on adjacent cells, leading to contact-dependent bidirectional signaling into neighboring cells. The signaling pathway downstream of the receptor is referred to as forward signaling while the signaling pathway downstream of the ephrin ligand is referred to as reverse signaling. Highly promiscuous for ephrin-A ligands it binds preferentially efna5. Upon activation by efna5 regulates cell-cell adhesion, cytoskeletal organization and cell migration. Plays a role in cardiac cells migration and differentiation probably through activation by efna1. Involved in the retinotectal mapping of neurons. May also control the segregation but not the guidance of motor and sensory axons during neuromuscular circuit development. The polypeptide is Ephrin type-A receptor 3 (epha3) (Danio rerio (Zebrafish)).